The chain runs to 153 residues: Acylphosphatase-like protein MJ0553 (153 aa).

In terms of domain architecture, Acylphosphatase-like spans 4 to 102 (TYELIIYGRV…SRLSSDDILE (99 aa)).

In Methanocaldococcus jannaschii (strain ATCC 43067 / DSM 2661 / JAL-1 / JCM 10045 / NBRC 100440) (Methanococcus jannaschii), this protein is Acylphosphatase-like protein MJ0553.